We begin with the raw amino-acid sequence, 225 residues long: UPF0758 protein Sama_0327 (225 aa).

The 123-residue stretch at 102-224 (VLTSPDLTRD…IVSFAERGWI (123 aa)) folds into the MPN domain. Positions 173, 175, and 186 each coordinate Zn(2+). A JAMM motif motif is present at residues 173 to 186 (HNHPSGVAEPSQAD).

It belongs to the UPF0758 family.

The polypeptide is UPF0758 protein Sama_0327 (Shewanella amazonensis (strain ATCC BAA-1098 / SB2B)).